A 172-amino-acid chain; its full sequence is Myosin regulatory light chain 2, smooth muscle major isoform (172 aa).

Basic residues predominate over residues 1–16 (MSSKRAKAKTTKKRPQ). A disordered region spans residues 1 to 20 (MSSKRAKAKTTKKRPQRATS). Serine 2 bears the N-acetylserine mark. 3 consecutive EF-hand domains span residues 29–64 (SQIQ…MGKN), 98–133 (DPED…MGDR), and 134–169 (FTDE…GAKD). Ca(2+) contacts are provided by aspartate 42, asparagine 44, aspartate 46, and aspartate 53.

In terms of assembly, myosin is a hexamer of 2 heavy chains and 4 light chains.

Myosin regulatory subunit that plays an important role in regulation of both smooth muscle and nonmuscle cell contractile activity. Implicated in cytokinesis, receptor capping, and cell locomotion. The polypeptide is Myosin regulatory light chain 2, smooth muscle major isoform (Gallus gallus (Chicken)).